The primary structure comprises 129 residues: Fluoride-specific ion channel FluC 1 (129 aa).

The next 3 membrane-spanning stretches (helical) occupy residues 43–63 (ASLLLGLVAGAAGAGAPPAWV), 68–88 (VVSLVGTGLCGALSTYSTFSY), and 100–120 (LLAAANVAGSVLAAFGAAALG). Residues Gly78 and Ser81 each coordinate Na(+).

The protein belongs to the fluoride channel Fluc/FEX (TC 1.A.43) family.

The protein localises to the cell membrane. It carries out the reaction fluoride(in) = fluoride(out). With respect to regulation, na(+) is not transported, but it plays an essential structural role and its presence is essential for fluoride channel function. Functionally, fluoride-specific ion channel. Important for reducing fluoride concentration in the cell, thus reducing its toxicity. The sequence is that of Fluoride-specific ion channel FluC 1 from Frankia casuarinae (strain DSM 45818 / CECT 9043 / HFP020203 / CcI3).